A 294-amino-acid chain; its full sequence is N-acetylmuramic acid 6-phosphate etherase (294 aa).

An SIS domain is found at 56-219 (TSYSLRNGGR…STLSMVSVGK (164 aa)). Glu-84 (proton donor) is an active-site residue. Glu-115 is a catalytic residue.

It belongs to the GCKR-like family. MurNAc-6-P etherase subfamily. In terms of assembly, homodimer.

It carries out the reaction N-acetyl-D-muramate 6-phosphate + H2O = N-acetyl-D-glucosamine 6-phosphate + (R)-lactate. It participates in amino-sugar metabolism; 1,6-anhydro-N-acetylmuramate degradation. Its pathway is amino-sugar metabolism; N-acetylmuramate degradation. The protein operates within cell wall biogenesis; peptidoglycan recycling. Functionally, specifically catalyzes the cleavage of the D-lactyl ether substituent of MurNAc 6-phosphate, producing GlcNAc 6-phosphate and D-lactate. Together with AnmK, is also required for the utilization of anhydro-N-acetylmuramic acid (anhMurNAc) either imported from the medium or derived from its own cell wall murein, and thus plays a role in cell wall recycling. This chain is N-acetylmuramic acid 6-phosphate etherase, found in Francisella tularensis subsp. holarctica (strain LVS).